The following is a 178-amino-acid chain: Large ribosomal subunit protein uL5 (178 aa).

Residue Ala2 is modified to N-acetylalanine. Lys38 participates in a covalent cross-link: Glycyl lysine isopeptide (Lys-Gly) (interchain with G-Cter in SUMO2). Phosphothreonine is present on residues Thr44 and Thr47. Lys52 carries the N6-acetyllysine; alternate modification. Lys52 is covalently cross-linked (Glycyl lysine isopeptide (Lys-Gly) (interchain with G-Cter in SUMO2); alternate). An N6-acetyllysine modification is found at Lys85. Lys154 is covalently cross-linked (Glycyl lysine isopeptide (Lys-Gly) (interchain with G-Cter in SUMO2)).

The protein belongs to the universal ribosomal protein uL5 family. As to quaternary structure, component of the large ribosomal subunit (LSU). Part of the 5S RNP complex, which is a LSU subcomplex composed of the 5S RNA, RPL5 and RPL11. Component of a hexameric 5S RNP precursor complex, composed of 5S RNA, RRS1, RPF2/BXDC1, RPL5, RPL11 and HEATR3; this complex acts as a precursor for ribosome assembly. Interacts with PML. Interacts with MDM2 (via its RanBP2-type zinc finger domain); negatively regulates MDM2-mediated TP53 ubiquitination and degradation. Interacts with NOP53; retains RPL11 into the nucleolus.

It is found in the nucleus. Its subcellular location is the nucleolus. It localises to the cytoplasm. Functionally, component of the ribosome, a large ribonucleoprotein complex responsible for the synthesis of proteins in the cell. The small ribosomal subunit (SSU) binds messenger RNAs (mRNAs) and translates the encoded message by selecting cognate aminoacyl-transfer RNA (tRNA) molecules. The large subunit (LSU) contains the ribosomal catalytic site termed the peptidyl transferase center (PTC), which catalyzes the formation of peptide bonds, thereby polymerizing the amino acids delivered by tRNAs into a polypeptide chain. The nascent polypeptides leave the ribosome through a tunnel in the LSU and interact with protein factors that function in enzymatic processing, targeting, and the membrane insertion of nascent chains at the exit of the ribosomal tunnel. As part of the 5S RNP/5S ribonucleoprotein particle it is an essential component of the LSU, required for its formation and the maturation of rRNAs. It also couples ribosome biogenesis to p53/TP53 activation. As part of the 5S RNP it accumulates in the nucleoplasm and inhibits MDM2, when ribosome biogenesis is perturbed, mediating the stabilization and the activation of TP53. Promotes nucleolar location of PML. This chain is Large ribosomal subunit protein uL5 (RPL11), found in Oryctolagus cuniculus (Rabbit).